A 316-amino-acid chain; its full sequence is Replication initiation protein (316 aa).

It belongs to the initiator RepB protein family.

In Escherichia coli, this protein is Replication initiation protein (repA).